Reading from the N-terminus, the 211-residue chain is Beta-crystallin B3 (211 aa).

Met-1 carries the N-acetylmethionine modification. The residue at position 2 (Ala-2) is an N-acetylalanine; in Beta-crystallin B3, N-terminally processed. The tract at residues 2 to 23 (AEQHGAPEQAAAGKSHGDLGGS) is N-terminal arm. Beta/gamma crystallin 'Greek key' domains lie at 24–63 (YKVILYELENFQGKRCELSAECPSLTDSLLEKVGSIQVES) and 64–108 (GPWL…RPLN). The interval 109 to 113 (IDSPH) is connecting peptide. Beta/gamma crystallin 'Greek key' domains follow at residues 114 to 155 (HKLH…RAIN) and 156 to 198 (GTWV…RRIR). The tract at residues 200 to 211 (QKWHKRGRFPSS) is C-terminal arm.

Belongs to the beta/gamma-crystallin family. Homo/heterodimer, or complexes of higher-order. The structure of beta-crystallin oligomers seems to be stabilized through interactions between the N-terminal arms.

Its function is as follows. Crystallins are the dominant structural components of the vertebrate eye lens. The protein is Beta-crystallin B3 (CRYBB3) of Homo sapiens (Human).